The primary structure comprises 283 residues: Elongation factor Ts (283 aa).

The involved in Mg(2+) ion dislocation from EF-Tu stretch occupies residues Thr80–Val83.

It belongs to the EF-Ts family.

It localises to the cytoplasm. Functionally, associates with the EF-Tu.GDP complex and induces the exchange of GDP to GTP. It remains bound to the aminoacyl-tRNA.EF-Tu.GTP complex up to the GTP hydrolysis stage on the ribosome. The chain is Elongation factor Ts from Salmonella paratyphi A (strain ATCC 9150 / SARB42).